Here is a 162-residue protein sequence, read N- to C-terminus: Small ribosomal subunit protein uS7m (162 aa).

The protein belongs to the universal ribosomal protein uS7 family. Part of the small ribosomal subunit.

It is found in the mitochondrion. One of the primary rRNA binding proteins, it binds directly to 16S-like rRNA where it nucleates assembly of the head domain of the small subunit. This Dictyostelium discoideum (Social amoeba) protein is Small ribosomal subunit protein uS7m (mrps7).